The chain runs to 170 residues: MYCPFCRHPDSRVVDSRVTDDGTAIRRRRSCPECGRRFTTVETAALSVIKRSGVIEPFSRAKVIAGVRKACQGRPVSEDALALLAQRVEDELRATGCSEVTSQEVGLAVLGPLRELDDVAYLRFASVYRGFESLEDFEAEIALQRAERALERSETVERGRPVPSRGVDDR.

A zinc finger spans residues 3–34 (CPFCRHPDSRVVDSRVTDDGTAIRRRRSCPEC). The 91-residue stretch at 46–136 (LSVIKRSGVI…VYRGFESLED (91 aa)) folds into the ATP-cone domain. The disordered stretch occupies residues 151–170 (ERSETVERGRPVPSRGVDDR).

It belongs to the NrdR family. Zn(2+) serves as cofactor.

Functionally, negatively regulates transcription of bacterial ribonucleotide reductase nrd genes and operons by binding to NrdR-boxes. The chain is Transcriptional repressor NrdR from Acidothermus cellulolyticus (strain ATCC 43068 / DSM 8971 / 11B).